The following is a 336-amino-acid chain: N-acetylornithine carbamoyltransferase (336 aa).

Carbamoyl phosphate contacts are provided by residues 49 to 52 (SMRT), W77, and R112. E144 provides a ligand contact to N(2)-acetyl-L-ornithine. A carbamoyl phosphate-binding site is contributed by 148–151 (HPCQ). Residues K252 and L295 each contribute to the N(2)-acetyl-L-ornithine site. Residue 294–295 (CL) coordinates carbamoyl phosphate. K302 is subject to N6-carboxylysine. R322 contributes to the carbamoyl phosphate binding site.

The protein belongs to the aspartate/ornithine carbamoyltransferase superfamily. AOTCase family. As to quaternary structure, homotrimer.

It is found in the cytoplasm. It catalyses the reaction N(2)-acetyl-L-ornithine + carbamoyl phosphate = N(2)-acetyl-L-citrulline + phosphate + H(+). Its pathway is amino-acid biosynthesis; L-arginine biosynthesis. Carboxylation at Lys-302 increases the catalytic activity of the enzyme. Functionally, catalyzes the transfer of the carbamoyl group from carbamoyl phosphate to the delta-amino group of N(2)-acetyl-L-ornithine to produce N(2)-acetyl-L-citrulline. This is a step in an alternative arginine biosynthesis pathway. The enzyme has no activity with ornithine. The chain is N-acetylornithine carbamoyltransferase from Xylella fastidiosa (strain Temecula1 / ATCC 700964).